The primary structure comprises 141 residues: Large ribosomal subunit protein uL11 (141 aa).

Belongs to the universal ribosomal protein uL11 family. In terms of assembly, part of the ribosomal stalk of the 50S ribosomal subunit. Interacts with L10 and the large rRNA to form the base of the stalk. L10 forms an elongated spine to which L12 dimers bind in a sequential fashion forming a multimeric L10(L12)X complex. One or more lysine residues are methylated.

Its function is as follows. Forms part of the ribosomal stalk which helps the ribosome interact with GTP-bound translation factors. In Cyanothece sp. (strain PCC 7425 / ATCC 29141), this protein is Large ribosomal subunit protein uL11.